The sequence spans 502 residues: Cytochrome P450 83A1 (502 aa).

Residues 1–21 form a helical membrane-spanning segment; sequence MEDIIIGVVALAAVLLFFLYQ. Cys442 lines the heme pocket.

Belongs to the cytochrome P450 family. The cofactor is heme.

Its subcellular location is the endoplasmic reticulum membrane. The enzyme catalyses an (E)-omega-(methylsulfanyl)-alkanal oxime + glutathione + reduced [NADPH--hemoprotein reductase] + O2 = an S-[(1E)-1-(hydroxyimino)-omega-(methylsulfanyl)alkyl]-L-glutathione + oxidized [NADPH--hemoprotein reductase] + 2 H2O + H(+). Functionally, involved in the metabolism of aliphatic and aromatic oximes. Involved in the biosynthesis of both short-chain and long-chain aliphatic glucosinolates. The chain is Cytochrome P450 83A1 (CYP83A1) from Arabidopsis thaliana (Mouse-ear cress).